Consider the following 173-residue polypeptide: Archaemetzincin (173 aa).

H130 serves as a coordination point for Zn(2+). The active-site Proton acceptor is E131. Residues H134, H140, C141, C146, C165, and C168 each coordinate Zn(2+).

This sequence belongs to the peptidase M54 family. Monomer. The cofactor is Zn(2+).

In terms of biological role, probable zinc metalloprotease whose natural substrate is unknown. This Haloarcula marismortui (strain ATCC 43049 / DSM 3752 / JCM 8966 / VKM B-1809) (Halobacterium marismortui) protein is Archaemetzincin.